The primary structure comprises 708 residues: Elongation factor G (708 aa).

One can recognise a tr-type G domain in the interval 9-289; the sequence is MFTRNIGIMA…AVCAFLPSPE (281 aa). GTP is bound by residues 18–25, 86–90, and 140–143; these read AHIDAGKT, DTPGH, and NKMD.

The protein belongs to the TRAFAC class translation factor GTPase superfamily. Classic translation factor GTPase family. EF-G/EF-2 subfamily.

It localises to the cytoplasm. Functionally, catalyzes the GTP-dependent ribosomal translocation step during translation elongation. During this step, the ribosome changes from the pre-translocational (PRE) to the post-translocational (POST) state as the newly formed A-site-bound peptidyl-tRNA and P-site-bound deacylated tRNA move to the P and E sites, respectively. Catalyzes the coordinated movement of the two tRNA molecules, the mRNA and conformational changes in the ribosome. The polypeptide is Elongation factor G (Parabacteroides distasonis (strain ATCC 8503 / DSM 20701 / CIP 104284 / JCM 5825 / NCTC 11152)).